The primary structure comprises 481 residues: Probable glycine dehydrogenase (decarboxylating) subunit 2 (481 aa).

At Lys-269 the chain carries N6-(pyridoxal phosphate)lysine.

This sequence belongs to the GcvP family. C-terminal subunit subfamily. The glycine cleavage system is composed of four proteins: P, T, L and H. In this organism, the P 'protein' is a heterodimer of two subunits. Requires pyridoxal 5'-phosphate as cofactor.

It carries out the reaction N(6)-[(R)-lipoyl]-L-lysyl-[glycine-cleavage complex H protein] + glycine + H(+) = N(6)-[(R)-S(8)-aminomethyldihydrolipoyl]-L-lysyl-[glycine-cleavage complex H protein] + CO2. The glycine cleavage system catalyzes the degradation of glycine. The P protein binds the alpha-amino group of glycine through its pyridoxal phosphate cofactor; CO(2) is released and the remaining methylamine moiety is then transferred to the lipoamide cofactor of the H protein. In Chlorobium chlorochromatii (strain CaD3), this protein is Probable glycine dehydrogenase (decarboxylating) subunit 2.